We begin with the raw amino-acid sequence, 693 residues long: Elongation factor G (693 aa).

Residues 8-282 (EKTRNIGIMA…AVIDYLPSPL (275 aa)) enclose the tr-type G domain. GTP-binding positions include 17–24 (AHIDAGKT), 81–85 (DTPGH), and 135–138 (NKMD).

The protein belongs to the TRAFAC class translation factor GTPase superfamily. Classic translation factor GTPase family. EF-G/EF-2 subfamily.

The protein resides in the cytoplasm. In terms of biological role, catalyzes the GTP-dependent ribosomal translocation step during translation elongation. During this step, the ribosome changes from the pre-translocational (PRE) to the post-translocational (POST) state as the newly formed A-site-bound peptidyl-tRNA and P-site-bound deacylated tRNA move to the P and E sites, respectively. Catalyzes the coordinated movement of the two tRNA molecules, the mRNA and conformational changes in the ribosome. The protein is Elongation factor G of Staphylococcus carnosus (strain TM300).